We begin with the raw amino-acid sequence, 123 residues long: Ribosome-binding factor A (123 aa).

It belongs to the RbfA family. Monomer. Binds 30S ribosomal subunits, but not 50S ribosomal subunits or 70S ribosomes.

It localises to the cytoplasm. Its function is as follows. One of several proteins that assist in the late maturation steps of the functional core of the 30S ribosomal subunit. Associates with free 30S ribosomal subunits (but not with 30S subunits that are part of 70S ribosomes or polysomes). Required for efficient processing of 16S rRNA. May interact with the 5'-terminal helix region of 16S rRNA. The chain is Ribosome-binding factor A from Trichlorobacter lovleyi (strain ATCC BAA-1151 / DSM 17278 / SZ) (Geobacter lovleyi).